The chain runs to 262 residues: Tryptophan synthase alpha chain (262 aa).

Residues Glu49 and Asp60 each act as proton acceptor in the active site.

This sequence belongs to the TrpA family. As to quaternary structure, tetramer of two alpha and two beta chains.

It carries out the reaction (1S,2R)-1-C-(indol-3-yl)glycerol 3-phosphate + L-serine = D-glyceraldehyde 3-phosphate + L-tryptophan + H2O. It functions in the pathway amino-acid biosynthesis; L-tryptophan biosynthesis; L-tryptophan from chorismate: step 5/5. The alpha subunit is responsible for the aldol cleavage of indoleglycerol phosphate to indole and glyceraldehyde 3-phosphate. This Thermoanaerobacter pseudethanolicus (strain ATCC 33223 / 39E) (Clostridium thermohydrosulfuricum) protein is Tryptophan synthase alpha chain.